Consider the following 194-residue polypeptide: Protein PHLOEM PROTEIN 2-LIKE A2 (194 aa).

Residues 49 to 71 (VTFVFFCFFKISLNSAYLYTLYS) traverse the membrane as a helical segment.

In terms of tissue distribution, vascular tissues, specifically in phloem companion cell-sieve element complexes.

The protein localises to the membrane. This is Protein PHLOEM PROTEIN 2-LIKE A2 (PP2A2) from Arabidopsis thaliana (Mouse-ear cress).